We begin with the raw amino-acid sequence, 338 residues long: MSSSVSSTSAPTKIVIPDLVSHCTIPVRCNRHWKQASVESKRWLFRGGNLSDRKRDAFHGLKAGYLTSMCYPLAGYPQLRVSCDFMNYLFHLDNISDEMNDRGTHGTAVSVLDALYQPHMHPTSRVGKMTKDYWVRLIQTASPGAQQRFIETFDMFFQAVTQQAMDRANGVIPDLESYIAIRRDTSGCKPCWALIEYANNLDLPWEIMDHPIIRGLGEAANDLVTWSNDIFSYNVEQSKGDTHNMIVVVQNQQGLDLQSAVNFVGDLCKQSIDRFHYLRENLPSWGPELDREVEIYVDGLADWITGSLKWSFESERYFGKAGLEVKKTRVVALLPRRA.

Residues D93, N228, S232, and E236 each coordinate Mg(2+). A DDXXD motif motif is present at residues 93–97 (DNISD). The NSE/DTE motif motif lies at 228 to 236 (NDIFSYNVE). 2 residues coordinate (2E,6E)-farnesyl diphosphate: R316 and Y317.

The protein belongs to the terpene synthase family. It depends on Mg(2+) as a cofactor.

It carries out the reaction (2E,6E)-farnesyl diphosphate = alpha-copaene + diphosphate. The catalysed reaction is (2E,6E)-farnesyl diphosphate = beta-copaene + diphosphate. The enzyme catalyses (2E,6E)-farnesyl diphosphate = alpha-muurolene + diphosphate. It catalyses the reaction (2E,6E)-farnesyl diphosphate = gamma-muurolene + diphosphate. It carries out the reaction (2E,6E)-farnesyl diphosphate = delta-cadinene + diphosphate. In terms of biological role, terpene cyclase that catalyzes the cyclization of farnesyl diphosphate (FPP) to various sesquiterpenes, including alpha-copaene, beta-copaene, beta-elemene, alpha-muurolene, gamma-muurolene and delta-cadinene. In Postia placenta (strain ATCC 44394 / Madison 698-R) (Brown rot fungus), this protein is Sesquiterpene synthase 2.